Reading from the N-terminus, the 189-residue chain is Protein F29A7.6 (189 aa).

The interval 124–161 (KSLGGQKLAALDKKSQSKRERRQQNERNEETTGGRRFN) is disordered. The segment covering 133-161 (ALDKKSQSKRERRQQNERNEETTGGRRFN) has biased composition (basic and acidic residues).

This sequence belongs to the MPP6 family.

The polypeptide is Protein F29A7.6 (Caenorhabditis elegans).